A 93-amino-acid chain; its full sequence is Mitochondrial import inner membrane translocase subunit Tim10-A (93 aa).

The short motif at 32 to 57 is the Twin CX3C motif element; sequence CHKKCVPPHYKEAELSKGESVCLDRC. 2 disulfides stabilise this stretch: C32-C57 and C36-C53.

The protein belongs to the small Tim family. As to quaternary structure, heterohexamer; composed of 3 copies of TIMM9 and 3 copies of TIMM10/TIM10A, named soluble 70 kDa complex. The complex forms a 6-bladed alpha-propeller structure and associates with the TIMM22 component of the TIM22 complex. Interacts with multi-pass transmembrane proteins in transit.

Its subcellular location is the mitochondrion inner membrane. Functionally, mitochondrial intermembrane chaperone that participates in the import and insertion of multi-pass transmembrane proteins into the mitochondrial inner membrane. May also be required for the transfer of beta-barrel precursors from the TOM complex to the sorting and assembly machinery (SAM complex) of the outer membrane. Acts as a chaperone-like protein that protects the hydrophobic precursors from aggregation and guide them through the mitochondrial intermembrane space. This chain is Mitochondrial import inner membrane translocase subunit Tim10-A (timm10-a), found in Xenopus laevis (African clawed frog).